We begin with the raw amino-acid sequence, 926 residues long: Beta-mannosidase A (926 aa).

An N-terminal signal peptide occupies residues 1–21; sequence MHVKAETVLALLTPAPPSVVG. N-linked (GlcNAc...) asparagine glycosylation is found at Asn-40, Asn-242, Asn-277, Asn-311, and Asn-342. Glu-474 acts as the Proton donor in catalysis. N-linked (GlcNAc...) asparagine glycosylation is found at Asn-532, Asn-603, Asn-626, Asn-653, Asn-733, Asn-756, Asn-785, Asn-793, Asn-819, and Asn-905.

This sequence belongs to the glycosyl hydrolase 2 family. Beta-mannosidase A subfamily. As to quaternary structure, homodimer.

Its subcellular location is the secreted. It carries out the reaction Hydrolysis of terminal, non-reducing beta-D-mannose residues in beta-D-mannosides.. The protein operates within glycan metabolism; N-glycan degradation. Exoglycosidase that cleaves the single beta-linked mannose residue from the non-reducing end of beta-mannosidic oligosaccharides of various complexity and length. Involved in the degradation of polymeric mannan and galactomannan. The protein is Beta-mannosidase A (mndA) of Aspergillus fumigatus (strain CBS 144.89 / FGSC A1163 / CEA10) (Neosartorya fumigata).